Here is a 494-residue protein sequence, read N- to C-terminus: Probable malate:quinone oxidoreductase (494 aa).

The protein belongs to the MQO family. The cofactor is FAD.

The enzyme catalyses (S)-malate + a quinone = a quinol + oxaloacetate. It functions in the pathway carbohydrate metabolism; tricarboxylic acid cycle; oxaloacetate from (S)-malate (quinone route): step 1/1. In Micrococcus luteus (strain ATCC 4698 / DSM 20030 / JCM 1464 / CCM 169 / CCUG 5858 / IAM 1056 / NBRC 3333 / NCIMB 9278 / NCTC 2665 / VKM Ac-2230) (Micrococcus lysodeikticus), this protein is Probable malate:quinone oxidoreductase.